The chain runs to 304 residues: MSNVLELTIPASTANLGVGFDSIGMALDKFLHLSVKETSGTKWEYIFHDDASKQLPTDETNFIYHVAQQVASKYSVDLPNLCIEMRSDIPLARGLGSSASALVGAIYIANYFGDIQLSKHEVLQLATEIEGHPDNVAPTIYGGLIAGYYNDVSKETSVAHIDIPDVDVIVTIPTYELKTEASRRALPQKLTHSEAVKSSAISNTMICALAQHNYELAGKLMQQDGFHEPYRQHLIAEFDEVKTIASQHNAYATVISGAGPTILIFSRKENSGELVRSLNSQVVSCHSELVDINISGVKERIVYQ.

90-100 contacts ATP; that stretch reads PLARGLGSSAS.

This sequence belongs to the GHMP kinase family. Homoserine kinase subfamily.

It is found in the cytoplasm. The catalysed reaction is L-homoserine + ATP = O-phospho-L-homoserine + ADP + H(+). It participates in amino-acid biosynthesis; L-threonine biosynthesis; L-threonine from L-aspartate: step 4/5. Functionally, catalyzes the ATP-dependent phosphorylation of L-homoserine to L-homoserine phosphate. This is Homoserine kinase from Staphylococcus aureus (strain NCTC 8325 / PS 47).